A 280-amino-acid polypeptide reads, in one-letter code: Phosphonates import ATP-binding protein PhnC 1 (280 aa).

The ABC transporter domain occupies 2 to 246 (LRIENLDKRY…VLTRIYGEED (245 aa)). Residue 35 to 42 (GPSGAGKS) participates in ATP binding. Residues 247–266 (WSKTSDEDADSVDAPPRAAD) are disordered.

This sequence belongs to the ABC transporter superfamily. Phosphonates importer (TC 3.A.1.9.1) family. As to quaternary structure, the complex is composed of two ATP-binding proteins (PhnC), two transmembrane proteins (PhnE) and a solute-binding protein (PhnD).

Its subcellular location is the cell inner membrane. The catalysed reaction is phosphonate(out) + ATP + H2O = phosphonate(in) + ADP + phosphate + H(+). Part of the ABC transporter complex PhnCDE involved in phosphonates import. Responsible for energy coupling to the transport system. The chain is Phosphonates import ATP-binding protein PhnC 1 from Rhodopseudomonas palustris (strain HaA2).